A 63-amino-acid polypeptide reads, in one-letter code: Large ribosomal subunit protein uL30 (63 aa).

It belongs to the universal ribosomal protein uL30 family. Part of the 50S ribosomal subunit.

The polypeptide is Large ribosomal subunit protein uL30 (Stenotrophomonas maltophilia (strain K279a)).